A 106-amino-acid chain; its full sequence is Iron-sulfur cluster assembly protein CyaY (106 aa).

Belongs to the frataxin family.

Its function is as follows. Involved in iron-sulfur (Fe-S) cluster assembly. May act as a regulator of Fe-S biogenesis. This chain is Iron-sulfur cluster assembly protein CyaY, found in Salmonella heidelberg (strain SL476).